The primary structure comprises 149 residues: MSDSVELFTDGACKGNPGPGGWGALLVFKGVEKELWGGEANTTNNRMELTGAIRGLEELKRPCEVTLVTDSQYVMKGITEWMVNWKKRGWKTAAKEPVKNADLWQLLDEQVSRHNVKWQWVRGHIGHPGNERADQLANRGVDEVRGIKS.

The RNase H type-1 domain maps to 1 to 142 (MSDSVELFTD…ADQLANRGVD (142 aa)). Residues Asp10, Glu48, Asp70, and Asp134 each coordinate Mg(2+).

Belongs to the RNase H family. In terms of assembly, monomer. It depends on Mg(2+) as a cofactor.

It is found in the cytoplasm. It carries out the reaction Endonucleolytic cleavage to 5'-phosphomonoester.. Its function is as follows. Endonuclease that specifically degrades the RNA of RNA-DNA hybrids. This chain is Ribonuclease H, found in Pseudomonas savastanoi pv. phaseolicola (strain 1448A / Race 6) (Pseudomonas syringae pv. phaseolicola (strain 1448A / Race 6)).